We begin with the raw amino-acid sequence, 232 residues long: Ion-translocating oxidoreductase complex subunit E (232 aa).

A run of 6 helical transmembrane segments spans residues 18-38 (GLVQ…ITNA), 39-59 (LGLG…VSLV), 69-89 (IPVF…LINA), 93-113 (GLYL…IIIG), 127-147 (AAFD…VLGA), and 182-202 (PFLL…LIAL).

This sequence belongs to the NqrDE/RnfAE family. The complex is composed of six subunits: RnfA, RnfB, RnfC, RnfD, RnfE and RnfG.

It localises to the cell inner membrane. Its function is as follows. Part of a membrane-bound complex that couples electron transfer with translocation of ions across the membrane. The chain is Ion-translocating oxidoreductase complex subunit E from Shewanella sp. (strain W3-18-1).